A 171-amino-acid polypeptide reads, in one-letter code: Shikimate kinase (171 aa).

14-19 (GAGKST) provides a ligand contact to ATP. Ser18 serves as a coordination point for Mg(2+). Residues Asp36, Arg60, and Gly82 each contribute to the substrate site. Residue Arg120 coordinates ATP. Residue Arg139 participates in substrate binding. Gln156 contributes to the ATP binding site.

This sequence belongs to the shikimate kinase family. As to quaternary structure, monomer. Mg(2+) is required as a cofactor.

It localises to the cytoplasm. The enzyme catalyses shikimate + ATP = 3-phosphoshikimate + ADP + H(+). The protein operates within metabolic intermediate biosynthesis; chorismate biosynthesis; chorismate from D-erythrose 4-phosphate and phosphoenolpyruvate: step 5/7. In terms of biological role, catalyzes the specific phosphorylation of the 3-hydroxyl group of shikimic acid using ATP as a cosubstrate. The protein is Shikimate kinase of Pseudoalteromonas atlantica (strain T6c / ATCC BAA-1087).